We begin with the raw amino-acid sequence, 44 residues long: Keratin-associated protein 20-3 (44 aa).

Belongs to the KRTAP type 20 family. Interacts with hair keratins.

In the hair cortex, hair keratin intermediate filaments are embedded in an interfilamentous matrix, consisting of hair keratin-associated proteins (KRTAP), which are essential for the formation of a rigid and resistant hair shaft through their extensive disulfide bond cross-linking with abundant cysteine residues of hair keratins. The matrix proteins include the high-sulfur and high-glycine-tyrosine keratins. The sequence is that of Keratin-associated protein 20-3 (KRTAP20-3) from Homo sapiens (Human).